Reading from the N-terminus, the 237-residue chain is Probable transcriptional regulatory protein NIS_0560 (237 aa).

The protein belongs to the TACO1 family.

The protein resides in the cytoplasm. The sequence is that of Probable transcriptional regulatory protein NIS_0560 from Nitratiruptor sp. (strain SB155-2).